Here is a 670-residue protein sequence, read N- to C-terminus: DNA ligase (670 aa).

NAD(+) is bound by residues Asp-34 to Asp-38, Ser-83 to Leu-84, and Glu-117. Lys-119 acts as the N6-AMP-lysine intermediate in catalysis. NAD(+) is bound by residues Arg-140, Glu-177, Lys-293, and Lys-317. The Zn(2+) site is built by Cys-411, Cys-414, Cys-429, and Cys-434. The BRCT domain maps to Lys-591 to Gly-670.

This sequence belongs to the NAD-dependent DNA ligase family. LigA subfamily. It depends on Mg(2+) as a cofactor. Mn(2+) serves as cofactor.

It catalyses the reaction NAD(+) + (deoxyribonucleotide)n-3'-hydroxyl + 5'-phospho-(deoxyribonucleotide)m = (deoxyribonucleotide)n+m + AMP + beta-nicotinamide D-nucleotide.. In terms of biological role, DNA ligase that catalyzes the formation of phosphodiester linkages between 5'-phosphoryl and 3'-hydroxyl groups in double-stranded DNA using NAD as a coenzyme and as the energy source for the reaction. It is essential for DNA replication and repair of damaged DNA. This chain is DNA ligase, found in Geobacter sulfurreducens (strain ATCC 51573 / DSM 12127 / PCA).